The primary structure comprises 806 residues: MGTKIMLVSYKWLKELVDIDVTPAALAEKMSATSIEVEGIEVPADGLSKLVVGHVLSCEDVPETHLHLCQVDTGDETPRQIVCGAPNVKAGIKVIVAVPGARIADNYKIKKGKIRGMESLGMICSLQELGLSDSIIPKEFSDGIQILPEEAVPGDAIFKYLDLDDHIIELSITPNRADALSMRGVAHEVAAIYGKSVSFPQKNLQESDKATSEAIEVAIASDNVLTYASRVVENVKVKPSPQWLQNLLMNAGIRPINNVVDVTNYVLLYFGQPMHAFDYDKFEDHKIVARAARQGESLVTLDGEKRDLTTEDLVITVADKPVALAGVMGGQATEIDANSQTVVLEVAVFDGKSIRKTSGRLNLRSESSSRFEKGVNYATVLEALDFAAAMLQELAEGQVLSGHVQAGQLPTEPVEVSTSLDYVNVRLGTELTFADIQRIFDQLGFGLTGDETSFTVAVPRRRWDVSIPADLVEEIARIYGYDKLPTTLPEAGGTAAELTPTQALRRKVRGLAEGLGLTEIISYALTTPEKAVEFAVAPSHLTELMWPMSVERSALRQNMVSGMLDTVAYNVARKQSNLALYEIGKIFEQEANPKEDLPNELNHFAFAICGLVAQKDFQTQAQAVDFYHAKGILDTLFANLNLKVQYVPTKDLASMHPGRTALILLDEQVIGFVGQVHPGTAKAYSIPETYVAELDMAALEAALPSDQTFAEITKFPAMTRDVALLLDREVSHQAIVTAIESAGVKRLTKIKLFDVYEGVTIQAGKKSMAYSLTFQNPNDNLTDEEVAKYMEKITKALTEQVGAEVR.

The tRNA-binding domain maps to 44-158 (ADGLSKLVVG…EEAVPGDAIF (115 aa)). The B5 domain maps to 411–486 (TEPVEVSTSL…RIYGYDKLPT (76 aa)). Mg(2+) contacts are provided by D464, D470, E473, and E474. An FDX-ACB domain is found at 713-806 (TKFPAMTRDV…LTEQVGAEVR (94 aa)).

The protein belongs to the phenylalanyl-tRNA synthetase beta subunit family. Type 1 subfamily. In terms of assembly, tetramer of two alpha and two beta subunits. It depends on Mg(2+) as a cofactor.

It localises to the cytoplasm. It carries out the reaction tRNA(Phe) + L-phenylalanine + ATP = L-phenylalanyl-tRNA(Phe) + AMP + diphosphate + H(+). The protein is Phenylalanine--tRNA ligase beta subunit of Streptococcus pyogenes serotype M28 (strain MGAS6180).